A 201-amino-acid chain; its full sequence is Ephrin-A4 (201 aa).

The N-terminal stretch at 1–25 (MRLLPLLRTVLWAAFLGSPLRGGSS) is a signal peptide. One can recognise an Ephrin RBD domain in the interval 26 to 155 (LRHVVYWNSS…RLQVSVCCKE (130 aa)). N33 is a glycosylation site (N-linked (GlcNAc...) asparagine). Intrachain disulfides connect C58–C99 and C86–C144. Residue S170 is the site of GPI-anchor amidated serine attachment. Positions 171–201 (GTSGWRGGDTPSPLCLLLLLLLLILRLLRIL) are cleaved as a propeptide — removed in mature form.

The protein belongs to the ephrin family. In terms of tissue distribution, expressed in the adult spleen, lymph node, prostate, ovary, small intestine, and colon, and in fetal heart, lung, liver and kidney. Also detected in hematopoietic cell lines.

It localises to the cell membrane. The protein localises to the secreted. In terms of biological role, cell surface GPI-bound ligand for Eph receptors, a family of receptor tyrosine kinases which are crucial for migration, repulsion and adhesion during neuronal, vascular and epithelial development. Binds promiscuously Eph receptors residing on adjacent cells, leading to contact-dependent bidirectional signaling into neighboring cells. May play a role in the interaction between activated B-lymphocytes and dendritic cells in tonsils. This Homo sapiens (Human) protein is Ephrin-A4 (EFNA4).